Reading from the N-terminus, the 307-residue chain is Coproporphyrin III ferrochelatase (307 aa).

Fe-coproporphyrin III is bound by residues tyrosine 12, arginine 29, 45–46 (RY), serine 53, and tyrosine 124. 2 residues coordinate Fe(2+): histidine 181 and glutamate 263.

The protein belongs to the ferrochelatase family.

It localises to the cytoplasm. The catalysed reaction is Fe-coproporphyrin III + 2 H(+) = coproporphyrin III + Fe(2+). Its pathway is porphyrin-containing compound metabolism; protoheme biosynthesis. Its function is as follows. Involved in coproporphyrin-dependent heme b biosynthesis. Catalyzes the insertion of ferrous iron into coproporphyrin III to form Fe-coproporphyrin III. This Staphylococcus aureus (strain COL) protein is Coproporphyrin III ferrochelatase.